Consider the following 447-residue polypeptide: Serine/threonine-protein phosphatase 2A 55 kDa regulatory subunit B alpha isoform (447 aa).

Ala2 carries the N-acetylalanine modification. WD repeat units follow at residues 11-80 (QWCF…FQSH), 94-174 (EKIN…IFAN), 175-218 (AHTY…VDIK), 227-270 (EVIT…KLFE), 288-325 (ISDVKFSHSGRYMMTRDYLSVKIWDLNMENRPVETYQV), 347-381 (ECCWNGSDSVVMTGSYNNFFRMFDRNTKRDITLEA), and 414-446 (DFNKKILHTAWHPKENIIAVATTNNLYIFQDKV).

It belongs to the phosphatase 2A regulatory subunit B family. In terms of assembly, PP2A consists of a common heterodimeric core enzyme, composed of a 36 kDa catalytic subunit (subunit C) and a 65 kDa constant regulatory subunit (PR65 or subunit A), that associates with a variety of regulatory subunits. Proteins that associate with the core dimer include three families of regulatory subunits B (the R2/B/PR55/B55, R3/B''/PR72/PR130/PR59 and R5/B'/B56 families), the 48 kDa variable regulatory subunit, viral proteins, and cell signaling molecules. Interacts with the PP2A C catalytic subunit PPP2CA. Interacts with the PP2A A subunit PPP2R1A. Interacts with TP53. Interacts with IER5. Interacts with MFHAS1; the interaction is direct. Interacts with PABIR1/FAM122A (via its N-terminus); the interaction is direct and inhibits PP2A activity. Interacts with ARPP19; the interaction is direct and inhibits PP2A activity. Interacts with CRTC3. As to expression, expressed in all tissues examined.

Substrate-recognition subunit of protein phosphatase 2A (PP2A) that plays a key role in cell cycle by controlling mitosis entry and exit. Involved in chromosome clustering during late mitosis by mediating dephosphorylation of MKI67. Essential for serine/threonine-protein phosphatase 2A-mediated dephosphorylation of WEE1, preventing its ubiquitin-mediated proteolysis, increasing WEE1 protein levels, and promoting the G2/M checkpoint. The polypeptide is Serine/threonine-protein phosphatase 2A 55 kDa regulatory subunit B alpha isoform (PPP2R2A) (Homo sapiens (Human)).